Consider the following 120-residue polypeptide: NADH-ubiquinone oxidoreductase chain 3 (120 aa).

Helical transmembrane passes span F7–L27, F62–F82, and M89–I109.

This sequence belongs to the complex I subunit 3 family.

It is found in the mitochondrion membrane. It catalyses the reaction a ubiquinone + NADH + 5 H(+)(in) = a ubiquinol + NAD(+) + 4 H(+)(out). In terms of biological role, core subunit of the mitochondrial membrane respiratory chain NADH dehydrogenase (Complex I) that is believed to belong to the minimal assembly required for catalysis. Complex I functions in the transfer of electrons from NADH to the respiratory chain. The immediate electron acceptor for the enzyme is believed to be ubiquinone. This chain is NADH-ubiquinone oxidoreductase chain 3 (nad3), found in Dictyostelium discoideum (Social amoeba).